A 103-amino-acid polypeptide reads, in one-letter code: MYAIIKTGGKQYKVAEGDSVFVEKLDAEEGSSVTFDEVILVANGDDVKVGTPLVDGAKVTAKVEKQGKEKKVVTFKYKPKKHSHSKYGHRQPYTKVTVEKIEA.

It belongs to the bacterial ribosomal protein bL21 family. In terms of assembly, part of the 50S ribosomal subunit. Contacts protein L20.

Functionally, this protein binds to 23S rRNA in the presence of protein L20. This Lactobacillus helveticus (strain DPC 4571) protein is Large ribosomal subunit protein bL21.